Reading from the N-terminus, the 237-residue chain is Proteasome subunit alpha type-5-A (237 aa).

At Met-1 the chain carries N-acetylmethionine. Residues Lys-43 and Lys-66 each participate in a glycyl lysine isopeptide (Lys-Gly) (interchain with G-Cter in ubiquitin) cross-link.

Belongs to the peptidase T1A family. Component of the 20S core complex of the 26S proteasome. The 26S proteasome is composed of a core protease (CP), known as the 20S proteasome, capped at one or both ends by the 19S regulatory particle (RP/PA700). The 20S proteasome core is composed of 28 subunits that are arranged in four stacked rings, resulting in a barrel-shaped structure. The two end rings are each formed by seven alpha subunits, and the two central rings are each formed by seven beta subunits. The catalytic chamber with the active sites is on the inside of the barrel.

It localises to the cytoplasm. The protein localises to the nucleus. Functionally, the proteasome is a multicatalytic proteinase complex which is characterized by its ability to cleave peptides with Arg, Phe, Tyr, Leu, and Glu adjacent to the leaving group at neutral or slightly basic pH. The proteasome has an ATP-dependent proteolytic activity. The protein is Proteasome subunit alpha type-5-A (PAE1) of Arabidopsis thaliana (Mouse-ear cress).